The chain runs to 294 residues: Phosphoribosylaminoimidazole-succinocarboxamide synthase (294 aa).

This sequence belongs to the SAICAR synthetase family.

It catalyses the reaction 5-amino-1-(5-phospho-D-ribosyl)imidazole-4-carboxylate + L-aspartate + ATP = (2S)-2-[5-amino-1-(5-phospho-beta-D-ribosyl)imidazole-4-carboxamido]succinate + ADP + phosphate + 2 H(+). It participates in purine metabolism; IMP biosynthesis via de novo pathway; 5-amino-1-(5-phospho-D-ribosyl)imidazole-4-carboxamide from 5-amino-1-(5-phospho-D-ribosyl)imidazole-4-carboxylate: step 1/2. The protein is Phosphoribosylaminoimidazole-succinocarboxamide synthase of Thermoplasma volcanium (strain ATCC 51530 / DSM 4299 / JCM 9571 / NBRC 15438 / GSS1).